A 469-amino-acid chain; its full sequence is Arginine biosynthesis bifunctional protein ArgJ, mitochondrial (469 aa).

Substrate is bound by residues T199, K228, T239, E325, N464, and T469. Residue T239 is the Nucleophile of the active site.

The protein belongs to the ArgJ family. In terms of assembly, heterodimer of an alpha and a beta chain. The alpha and beta chains are autoproteolytically processed from a single precursor protein within the mitochondrion.

It is found in the mitochondrion matrix. It carries out the reaction N(2)-acetyl-L-ornithine + L-glutamate = N-acetyl-L-glutamate + L-ornithine. It catalyses the reaction L-glutamate + acetyl-CoA = N-acetyl-L-glutamate + CoA + H(+). It functions in the pathway amino-acid biosynthesis; L-arginine biosynthesis; L-ornithine and N-acetyl-L-glutamate from L-glutamate and N(2)-acetyl-L-ornithine (cyclic): step 1/1. Its pathway is amino-acid biosynthesis; L-arginine biosynthesis; N(2)-acetyl-L-ornithine from L-glutamate: step 1/4. In terms of biological role, catalyzes two activities which are involved in the cyclic version of arginine biosynthesis: the synthesis of acetylglutamate from glutamate and acetyl-CoA, and of ornithine by transacetylation between acetylornithine and glutamate. This is Arginine biosynthesis bifunctional protein ArgJ, mitochondrial from Neurospora crassa (strain ATCC 24698 / 74-OR23-1A / CBS 708.71 / DSM 1257 / FGSC 987).